The sequence spans 207 residues: Sodium/potassium-transporting ATPase subunit beta-1-interacting protein 1 (207 aa).

The next 3 helical transmembrane spans lie at 2–22 (GRCD…VAAL), 35–55 (APIL…FGTV), and 62–82 (LILY…IICF). Residue Asn100 is glycosylated (N-linked (GlcNAc...) asparagine). A helical transmembrane segment spans residues 147–167 (VVSSALQVFLALFGFVYACYV).

The protein belongs to the NKAIN family. In terms of assembly, interacts with atp1b1 C-terminus.

The protein localises to the cell membrane. This Danio rerio (Zebrafish) protein is Sodium/potassium-transporting ATPase subunit beta-1-interacting protein 1 (nkain1).